A 254-amino-acid chain; its full sequence is NAD-dependent protein deacetylase 1 (254 aa).

Positions 5-254 (ASDLRSGVER…GETLGPFVGN (250 aa)) constitute a Deacetylase sirtuin-type domain. Residues Ala-31, Thr-35, Phe-42, Arg-43, Gln-108, Ile-110, Asp-111, and His-128 each contribute to the NAD(+) site. Phe-42 provides a ligand contact to nicotinamide. Nicotinamide-binding residues include Ile-110 and Asp-111. The active-site Proton acceptor is the His-128. Residues Cys-136, Cys-139, Cys-160, and Cys-163 each contribute to the Zn(2+) site. Positions 201, 202, 226, 243, and 244 each coordinate NAD(+).

Belongs to the sirtuin family. Class U subfamily. It depends on Zn(2+) as a cofactor.

It localises to the cytoplasm. The enzyme catalyses N(6)-acetyl-L-lysyl-[protein] + NAD(+) + H2O = 2''-O-acetyl-ADP-D-ribose + nicotinamide + L-lysyl-[protein]. NAD-dependent protein deacetylase which modulates the activities of several enzymes which are inactive in their acetylated form. The sequence is that of NAD-dependent protein deacetylase 1 from Bradyrhizobium diazoefficiens (strain JCM 10833 / BCRC 13528 / IAM 13628 / NBRC 14792 / USDA 110).